The following is a 396-amino-acid chain: Jacalin-related lectin 45 (396 aa).

Jacalin-type lectin domains follow at residues 3–138, 144–264, and 270–392; these read KKVT…KTSH, QFRM…NFAV, and VKKL…YVKP.

This sequence belongs to the jacalin lectin family.

This chain is Jacalin-related lectin 45 (JAL45), found in Arabidopsis thaliana (Mouse-ear cress).